The following is a 141-amino-acid chain: Ribosome-binding factor A (141 aa).

The tract at residues 120–141 (SPHVQRDLQENDDQEDDSEGSL) is disordered. The span at 129-141 (ENDDQEDDSEGSL) shows a compositional bias: acidic residues.

The protein belongs to the RbfA family. In terms of assembly, monomer. Binds 30S ribosomal subunits, but not 50S ribosomal subunits or 70S ribosomes.

It localises to the cytoplasm. Functionally, one of several proteins that assist in the late maturation steps of the functional core of the 30S ribosomal subunit. Associates with free 30S ribosomal subunits (but not with 30S subunits that are part of 70S ribosomes or polysomes). Required for efficient processing of 16S rRNA. May interact with the 5'-terminal helix region of 16S rRNA. In Zymomonas mobilis subsp. mobilis (strain ATCC 31821 / ZM4 / CP4), this protein is Ribosome-binding factor A.